A 146-amino-acid chain; its full sequence is 3-dehydroquinate dehydratase (146 aa).

Tyr23 serves as the catalytic Proton acceptor. 3 residues coordinate substrate: Asn74, His80, and Asp87. His100 acts as the Proton donor in catalysis. Substrate-binding positions include 101–102 and Arg111; that span reads IS.

This sequence belongs to the type-II 3-dehydroquinase family. Homododecamer.

The enzyme catalyses 3-dehydroquinate = 3-dehydroshikimate + H2O. It functions in the pathway metabolic intermediate biosynthesis; chorismate biosynthesis; chorismate from D-erythrose 4-phosphate and phosphoenolpyruvate: step 3/7. Its function is as follows. Catalyzes a trans-dehydration via an enolate intermediate. The sequence is that of 3-dehydroquinate dehydratase from Bacillus cereus (strain B4264).